A 2131-amino-acid polypeptide reads, in one-letter code: Beta/gamma crystallin domain-containing protein 1 (2131 aa).

5 disordered regions span residues Met-1–Pro-53, Lys-104–Ala-370, Thr-385–Lys-674, Arg-688–Ser-707, and Ala-723–Leu-743. Basic residues predominate over residues Pro-19 to Gln-35. Residues Arg-135–Lys-147 show a composition bias toward polar residues. Composition is skewed to basic and acidic residues over residues Leu-160–Arg-169 and Gly-184–Glu-194. Residues Ala-248–Gln-265 are compositionally biased toward polar residues. The segment covering Ser-414–Ser-424 has biased composition (basic residues). Low complexity predominate over residues Ala-479–Pro-490. Phosphoserine is present on residues Ser-483 and Ser-489. 2 stretches are compositionally biased toward basic and acidic residues: residues Pro-536–Pro-546 and Glu-562–Pro-572. Over residues Arg-609–Ala-619 the composition is skewed to low complexity. Residues Ala-723 to Val-733 are compositionally biased toward basic and acidic residues. Phosphoserine is present on residues Ser-737 and Ser-756. Disordered regions lie at residues Glu-758–Thr-791 and Asp-837–Cys-889. Residues Gly-769–Asn-782 are compositionally biased toward polar residues. A compositionally biased stretch (low complexity) spans Ser-864–Pro-881. Ser-892 is subject to Phosphoserine. Disordered stretches follow at residues Leu-926 to Ser-947, Gln-1041 to Ser-1101, Ser-1271 to Asn-1302, and Ser-1316 to Asn-1348. Thr-933 carries the phosphothreonine modification. The segment covering Ser-1055–Asn-1089 has biased composition (polar residues). Composition is skewed to low complexity over residues Ser-1091 to Ser-1101, Ser-1271 to Thr-1288, and Ser-1316 to Pro-1327. Positions Ser-1328 to Asn-1348 are enriched in basic and acidic residues. 12 consecutive Beta/gamma crystallin 'Greek key' domains span residues Gly-1430–Arg-1469, Gly-1470–Val-1525, Ser-1531–Trp-1571, Gly-1572–Lys-1614, Pro-1626–Arg-1678, Gly-1679–Leu-1721, Ala-1727–Ser-1769, Gly-1770–Cys-1812, Asn-1823–Gly-1860, Gly-1861–Asp-1904, Pro-1910–Gly-1950, and Gly-1951–Val-1992. In terms of domain architecture, Ricin B-type lectin spans Lys-1994–Met-2127.

Belongs to the beta/gamma-crystallin family.

Its function is as follows. May function as suppressor of malignant melanoma. It may exert its effects through interactions with the cytoskeleton. This Homo sapiens (Human) protein is Beta/gamma crystallin domain-containing protein 1.